Consider the following 430-residue polypeptide: MLYEKFEYNINNLIGNFGLSKIAIAVSGGSDSISLLYLANIWARKNNIELFVISVDHNLRPQSKQENYYIHTISSNLNRKYYNLSFDHQNNFSNLQERAREGRYDLMTNLCLELDVLVLLTAHHEDDYVENFCLRLERNSGIFGLSSSNIHWYNNIQIIRPLYNIPKSELVEYLVNHKIKWFEDESNLSDKYRRNIIRQKLFKEENYIKAEISLQQLKTNKLIEDELKPALISAIAEAVKIFEYGFTFLDLVKFDKFLNEVKAQIINFLLIMISGQSRSARFYSIAHILKLISQDINFKNTVHGCVIKRIQNELLIYREFGKKLPKSKILLDKSVIWDNRFCITKNQKTPDCVITYLSLADYKAIKKQLDLKHLKNLSCKNHNAILFTLPIIKILEKVIAIPHISYYDNDVWNFEVSFAPNFVSRFTHFC.

Residue 27–32 (SGGSDS) coordinates ATP.

Belongs to the tRNA(Ile)-lysidine synthase family.

The protein localises to the cytoplasm. It carries out the reaction cytidine(34) in tRNA(Ile2) + L-lysine + ATP = lysidine(34) in tRNA(Ile2) + AMP + diphosphate + H(+). In terms of biological role, ligates lysine onto the cytidine present at position 34 of the AUA codon-specific tRNA(Ile) that contains the anticodon CAU, in an ATP-dependent manner. Cytidine is converted to lysidine, thus changing the amino acid specificity of the tRNA from methionine to isoleucine. The sequence is that of tRNA(Ile)-lysidine synthase from Rickettsia prowazekii (strain Madrid E).